The sequence spans 355 residues: Probable butyrate kinase (355 aa).

It belongs to the acetokinase family.

It localises to the cytoplasm. It carries out the reaction butanoate + ATP = butanoyl phosphate + ADP. The polypeptide is Probable butyrate kinase (Clostridium botulinum (strain Alaska E43 / Type E3)).